The chain runs to 105 residues: Small ribosomal subunit protein uS10 (105 aa).

This sequence belongs to the universal ribosomal protein uS10 family. In terms of assembly, part of the 30S ribosomal subunit.

Functionally, involved in the binding of tRNA to the ribosomes. This Synechococcus sp. (strain JA-2-3B'a(2-13)) (Cyanobacteria bacterium Yellowstone B-Prime) protein is Small ribosomal subunit protein uS10.